A 353-amino-acid polypeptide reads, in one-letter code: MDENKQRALAAALGQIEKQFGKGSIMRLGDTQTLDIESISTGSLSLDVALGIGGLPMGRIVEIFGPESSGKTTLTLSVIACAQAAGKTCAFIDAEHALDPIYAAKLGVNVDDLLVSQPDTGEQALEICDALVRSGAVDVIIVDSVAALTPKAEIEGEMGDSHVGLQARLMSQALRKLTANIKNANCLVVFINQIRMKIGVMFGNPETTTGGNALKFYSSVRLDIRRIGAIKEGDEVVGNETRVKVVKNKVAPPFRQAEFQILYGAGISKESELIDLGVKHKLLDKSGAWYSYNGDKIGQGKANSMKFLQENTTISAELEGKLRELLLSHAAATDAERAGAEREDNAAADDENF.

ATP is bound at residue 65–72; it reads GPESSGKT. Basic and acidic residues predominate over residues 334–345; the sequence is DAERAGAEREDN. The segment at 334-353 is disordered; that stretch reads DAERAGAEREDNAAADDENF.

It belongs to the RecA family.

It localises to the cytoplasm. Can catalyze the hydrolysis of ATP in the presence of single-stranded DNA, the ATP-dependent uptake of single-stranded DNA by duplex DNA, and the ATP-dependent hybridization of homologous single-stranded DNAs. It interacts with LexA causing its activation and leading to its autocatalytic cleavage. The chain is Protein RecA from Edwardsiella ictaluri (strain 93-146).